The sequence spans 318 residues: Pyrroline-5-carboxylate reductase ucsG (318 aa).

This sequence belongs to the pyrroline-5-carboxylate reductase family.

It functions in the pathway mycotoxin biosynthesis. Pyrroline-5-carboxylate reductase; part of the gene cluster that mediates the biosynthesis of UCS1025A, a member of the pyrrolizidinone family that acts as a strong telomerase inhibitor and displays potent antibacterial and antitumor properties. These compounds share a hemiaminal-containing pyrrolizidinone core fused with a gamma-lactone, giving a furopyrrolizidine that is connected to a decalin fragment. The polyketide synthase module (PKS) of the PKS-NRPS ucsA is responsible for the synthesis of the polyketide backbone via the condensation of an acetyl-CoA starter unit with 6 malonyl-CoA units. The downstream nonribosomal peptide synthetase (NRPS) module then amidates the carboxyl end of the polyketide with a 2S,3S-methylproline derived from L-isoleucine by the 2-oxoglutarate-dependent dioxygenase ucsF which converts L-isoleucine to (4S,5S)-4-methylpyrroline-5-carboxylate that is further converted to 2S,3S-methylproline by the pyrroline-5-carboxylate reductase ucsG. Reductive release of the completed aminoacyl polyketide from the assembly line can form the 3-pyrrolin-2-one structure via an intramolecular Knoevenagel reaction. Because ucsA lacks a designated enoylreductase (ER) domain, the required activity is provided the enoyl reductase ucsL. This keto acyclic precursor is the substrate of the Diels-Alderase ucsH, that catalyzes the Diels-Alder cycloaddition. Oxidation of the 3S-methyl group to a carboxylate by the cytochrome P450 monooxygenase ucsK allows an oxa-Michael cyclization that might involve the reductase/dehydrogenase ucsI and which furnishes the furopyrrolizidine. The oxidase ucsJ likely plays a critical role in stereoselective reduction of the C5-C6 double bond to afford the required R-configured carboxylate group. Further enolization and oxidation at C5 by an unidentified enzyme affords the last intermediate that can undergo oxa-Michael cyclization to yield UCS1025A. The polypeptide is Pyrroline-5-carboxylate reductase ucsG (Acremonium sp).